We begin with the raw amino-acid sequence, 1423 residues long: Fructan beta-fructosidase (1423 aa).

The signal sequence occupies residues 1-39; that stretch reads MEEETVCKNWFMRKSGKSWIFGCAVFFVLGLATALPVAA. A disordered region spans residues 44–161; the sequence is QTTAADTAVT…TNLEDMSHDT (118 aa). Residues 69 to 126 show a composition bias toward polar residues; that stretch reads AVTETTQSEGTASKQLTTPAVADQTTEPTDNEPISSSDGASSPYQVTDTTEPQQTLTP. Substrate contacts are provided by residues 455 to 458, Gln474, 513 to 514, 581 to 582, and Asp783; these read WAND, FS, and RD. Residue Asp458 is part of the active site. The involved in binding of sugars with beta-(2,6) linkages or binding of molecular weight fructans stretch occupies residues 867–871; the sequence is ASVEV. A BIG2 domain is found at 924–1002; the sequence is PVAMNTTTAK…SKENPSLSKT (79 aa). Over residues 1368–1385 the composition is skewed to polar residues; sequence DVNSVQQTEPSVMSSSPK. A disordered region spans residues 1368 to 1394; it reads DVNSVQQTEPSVMSSSPKATLPDTGDH. The short motif at 1388-1392 is the LPXTG sorting signal element; sequence LPDTG. Thr1391 carries the post-translational modification Pentaglycyl murein peptidoglycan amidated threonine. The propeptide at 1392-1423 is removed by sortase; sequence GDHKTDLSQLGVLAMIGSFLVEIAGYFKKRKD.

It belongs to the glycosyl hydrolase 32 family.

It localises to the secreted. It is found in the cell wall. It catalyses the reaction Hydrolysis of terminal, non-reducing (2-&gt;1)- and (2-&gt;6)-linked beta-D-fructofuranose residues in fructans.. In terms of biological role, this protein is a fructanase enzyme which degrades levans and inulins to fructose and also cleaves sucrose into glucose and fructose and can therefore function as an extracellular invertase. The protein is Fructan beta-fructosidase (fruA) of Streptococcus mutans serotype c (strain ATCC 700610 / UA159).